We begin with the raw amino-acid sequence, 664 residues long: MFQDNPLLAQLKQQIQENLPKKEGTIKATEKGFGFLEVDSKTSFFIPPAYMKKCMHGDKVIAIIRTENEREVAEPQELVEQMLNRFIGRVKMFKGKLNVVPDHPQLKKMSLKAKTKKGLNPQEFAEGDWVVGHLIRHPLKDDNGFFVEISEKITDADDKIAPWWVTLAENDLPNSEPAGIDDWQIKDDADLERIDMTHIPFVTIDGESTKDMDDALYAKKNDAGDFELTIAIADPTAYITPDDEMDKVARERGFTIYLPGRNIPMLPRDLADELCSLIEGEIRPALCCTVTVSKDGVIGDDIQFFAANIKSHARLAYDNVSDWLETGSCEKWQPSEEIAAIVRDLYEFSQARAEWREKNAVVFPDRPDYRFELSEDNDVVAIHADMRRSANRLVEESMITANICAGKTLQAHFGTGVFNCHAGFKPEKIADVVELVNPEGTLEFTAESIATREGFAALRRWLSKQETTYLDNRIRKFQTYSEVSNQPLPHYAMGLDIYATWTSPIRKYGDMINHRMLKALILNKEPVQKPDDSVGEELALHRKHHKIAERNVADWLYARTLADAPENQTLFTGEIFDINRAGMRIRLLENGAAAFIPGSLIIDNKERIECNGDLGTVSIDKEVVYKLGDVLEVVLADVNQENRSLVAKPTQVFAELPVVEETQN.

The region spanning 193-521 is the RNB domain; that stretch reads RIDMTHIPFV…INHRMLKALI (329 aa). Positions 568 to 650 constitute an S1 motif domain; the sequence is QTLFTGEIFD…ENRSLVAKPT (83 aa).

It belongs to the RNR ribonuclease family. RNase II subfamily.

It localises to the cytoplasm. It catalyses the reaction Exonucleolytic cleavage in the 3'- to 5'-direction to yield nucleoside 5'-phosphates.. Functionally, involved in mRNA degradation. Hydrolyzes single-stranded polyribonucleotides processively in the 3' to 5' direction. The protein is Exoribonuclease 2 of Vibrio vulnificus (strain YJ016).